We begin with the raw amino-acid sequence, 184 residues long: Gastrokine-2 (184 aa).

Positions 1–20 (MKPLVAFLVVLSIFGIQSQA) are cleaved as a signal peptide. In terms of domain architecture, BRICHOS spans 54–151 (HSGSCSSTTI…LCKHMPLYEG (98 aa)). Cysteines 81 and 143 form a disulfide.

Heterodimer with TFF1; disulfide linked. Interacts with TFF2. As to expression, stomach foveolar epithelium and duodenal Brunner's glands.

It localises to the secreted. The protein localises to the golgi apparatus. The polypeptide is Gastrokine-2 (Gkn2) (Mus musculus (Mouse)).